A 169-amino-acid polypeptide reads, in one-letter code: Thiol peroxidase (169 aa).

The 149-residue stretch at 19 to 167 (LKVGDRAPEA…YDEVVNKVKE (149 aa)) folds into the Thioredoxin domain. Cysteine 61 serves as the catalytic Cysteine sulfenic acid (-SOH) intermediate. A disulfide bridge links cysteine 61 with cysteine 95.

The protein belongs to the peroxiredoxin family. Tpx subfamily. Homodimer.

The catalysed reaction is a hydroperoxide + [thioredoxin]-dithiol = an alcohol + [thioredoxin]-disulfide + H2O. Thiol-specific peroxidase that catalyzes the reduction of hydrogen peroxide and organic hydroperoxides to water and alcohols, respectively. Plays a role in cell protection against oxidative stress by detoxifying peroxides. This chain is Thiol peroxidase, found in Aquifex aeolicus (strain VF5).